We begin with the raw amino-acid sequence, 496 residues long: Acetyltransferase adrJ (496 aa).

Catalysis depends on proton acceptor residues His174 and Asp421.

It belongs to the plant acyltransferase family. As to quaternary structure, monomer.

It participates in secondary metabolite biosynthesis; terpenoid biosynthesis. Its function is as follows. Acetyltransferase; part of the gene cluster that mediates the biosynthesis of andrastins, meroterpenoid compounds that exhibit inhibitory activity against ras farnesyltransferase, suggesting that they could be promising leads for antitumor agents. The first step of the pathway is the synthesis of 3,5-dimethylorsellinic acid (DMOA) by the polyketide synthase adrD via condensation of one acetyl-CoA starter unit with 3 malonyl-CoA units and 2 methylations. DMAO is then converted to farnesyl-DMAO by the prenyltransferase adrG. The methyltransferase adrK catalyzes the methylation of the carboxyl group of farnesyl-DMAO to farnesyl-DMAO methyl ester which is further converted to epoxyfarnesyl-DMAO methyl ester by the FAD-dependent monooxygenase adrH. The terpene cyclase adrI then catalyzes the carbon skeletal rearrangement to generate the andrastin E, the first compound in the pathway having the andrastin scaffold, with the tetracyclic ring system. The post-cyclization tailoring enzymes adrF, adrE, adrJ, and adrA, are involved in the conversion of andrastin E into andrastin A. The short chain dehydrogenase adrF is responsible for the oxidation of the C-3 a hydroxyl group of andrastin E to yield the corresponding ketone, andrastin D. The ketoreductase adrE stereoselectively reduces the carbonyl moiety to reverse the stereochemistry of the C-3 position to yield andrastin F. The acetyltransferase adrJ is the acetyltransferase that attaches the acetyl group to the C-3 hydroxyl group of andrastin F to yield andrastin C. Finally, the cytochrome P450 monooxygenase adrA catalyzes two sequential oxidation reactions of the C-23 methyl group, to generate the corresponding alcohol andrastin B, and aldehyde andrastin A. This chain is Acetyltransferase adrJ, found in Penicillium roqueforti.